The primary structure comprises 505 residues: Protein disulfide-isomerase (505 aa).

An N-terminal signal peptide occupies residues 1–20; that stretch reads MHKAQKFALGLLAAAAVATA. Thioredoxin domains are found at residues 21–128 and 335–465; these read SDVV…QSLP and FVAG…ENGK. Active-site nucleophile residues include cysteine 50, cysteine 53, cysteine 385, and cysteine 388. Cystine bridges form between cysteine 50–cysteine 53 and cysteine 385–cysteine 388. Positions 470 to 505 are disordered; the sequence is ISEDAEETSSATETTTETATKSEEAAKETATEHDEL. Residues 477 to 488 show a composition bias toward low complexity; the sequence is TSSATETTTETA. The span at 489–505 shows a compositional bias: basic and acidic residues; it reads TKSEEAAKETATEHDEL. The Prevents secretion from ER motif lies at 502–505; that stretch reads HDEL.

It belongs to the protein disulfide isomerase family.

The protein localises to the endoplasmic reticulum lumen. It carries out the reaction Catalyzes the rearrangement of -S-S- bonds in proteins.. Functionally, participates in the folding of proteins containing disulfide bonds, may be involved in glycosylation, prolyl hydroxylation and triglyceride transfer. This chain is Protein disulfide-isomerase, found in Humicola insolens (Soft-rot fungus).